Consider the following 304-residue polypeptide: N-acetylmuramic acid 6-phosphate etherase (304 aa).

Residues 62–225 (IVQAFQNGGR…TTASMVMIGK (164 aa)) form the SIS domain. Catalysis depends on Glu90, which acts as the Proton donor. Residue Glu121 is part of the active site.

Belongs to the GCKR-like family. MurNAc-6-P etherase subfamily. In terms of assembly, homodimer.

The enzyme catalyses N-acetyl-D-muramate 6-phosphate + H2O = N-acetyl-D-glucosamine 6-phosphate + (R)-lactate. It functions in the pathway amino-sugar metabolism; 1,6-anhydro-N-acetylmuramate degradation. It participates in amino-sugar metabolism; N-acetylmuramate degradation. The protein operates within cell wall biogenesis; peptidoglycan recycling. Its function is as follows. Specifically catalyzes the cleavage of the D-lactyl ether substituent of MurNAc 6-phosphate, producing GlcNAc 6-phosphate and D-lactate. Together with AnmK, is also required for the utilization of anhydro-N-acetylmuramic acid (anhMurNAc) either imported from the medium or derived from its own cell wall murein, and thus plays a role in cell wall recycling. This is N-acetylmuramic acid 6-phosphate etherase from Actinobacillus pleuropneumoniae serotype 5b (strain L20).